The sequence spans 442 residues: Asparagine--tRNA ligase (442 aa).

Belongs to the class-II aminoacyl-tRNA synthetase family. As to quaternary structure, homodimer.

The protein localises to the cytoplasm. The enzyme catalyses tRNA(Asn) + L-asparagine + ATP = L-asparaginyl-tRNA(Asn) + AMP + diphosphate + H(+). This Koribacter versatilis (strain Ellin345) protein is Asparagine--tRNA ligase.